Here is a 412-residue protein sequence, read N- to C-terminus: Multifunctional CCA protein (412 aa).

ATP-binding residues include glycine 8 and arginine 11. Residues glycine 8 and arginine 11 each coordinate CTP. The Mg(2+) site is built by aspartate 21 and aspartate 23. ATP-binding residues include arginine 91, arginine 137, and arginine 140. Arginine 91, arginine 137, and arginine 140 together coordinate CTP. An HD domain is found at 228–329 (TGIHTMMVLE…VKLFDKADFW (102 aa)).

It belongs to the tRNA nucleotidyltransferase/poly(A) polymerase family. Bacterial CCA-adding enzyme type 1 subfamily. Monomer. Can also form homodimers and oligomers. The cofactor is Mg(2+). It depends on Ni(2+) as a cofactor.

It catalyses the reaction a tRNA precursor + 2 CTP + ATP = a tRNA with a 3' CCA end + 3 diphosphate. It carries out the reaction a tRNA with a 3' CCA end + 2 CTP + ATP = a tRNA with a 3' CCACCA end + 3 diphosphate. Catalyzes the addition and repair of the essential 3'-terminal CCA sequence in tRNAs without using a nucleic acid template. Adds these three nucleotides in the order of C, C, and A to the tRNA nucleotide-73, using CTP and ATP as substrates and producing inorganic pyrophosphate. tRNA 3'-terminal CCA addition is required both for tRNA processing and repair. Also involved in tRNA surveillance by mediating tandem CCA addition to generate a CCACCA at the 3' terminus of unstable tRNAs. While stable tRNAs receive only 3'-terminal CCA, unstable tRNAs are marked with CCACCA and rapidly degraded. In Shewanella pealeana (strain ATCC 700345 / ANG-SQ1), this protein is Multifunctional CCA protein.